The following is a 571-amino-acid chain: Hsp70-Hsp90 organizing protein 2 (571 aa).

TPR repeat units lie at residues 2–35 (ADEAKAKGNAAFSSGDFNSAVNHFTDAINLTPTN), 37–69 (VLFSNRSAAHASLNHYDEALSDAKKTVELKPDW), and 70–103 (GKGYSRLGAAHLGLNQFDEAVEAYSKGLEIDPSN). The segment at 117 to 137 (ASRSRASAPNPFGDAFQGPEM) is disordered. The region spanning 134–173 (GPEMWSKLTADPSTRGLLKQPDFVNMMKEIQRNPSNLNLY) is the STI1 1 domain. The residue at position 168 (Ser168) is a Phosphoserine. The segment covering 198–207 (DDMEIGEEEM) has biased composition (acidic residues). Residues 198 to 245 (DDMEIGEEEMAVPSRKEPEVEKKRKPEPEPEPEPEFGEEKQKKLKAQK) form a disordered region. Composition is skewed to basic and acidic residues over residues 211 to 225 (SRKEPEVEKKRKPEP) and 234 to 245 (GEEKQKKLKAQK). Positions 240 to 257 (KLKAQKEKELGNAAYKKK) match the Bipartite nuclear localization signal motif. 6 TPR repeats span residues 243–276 (AQKEKELGNAAYKKKDFETAIQHYSTAMEIDDED), 278–310 (SYITNRAAVHLEMGKYDECIKDCDKAVERGREL), 322–355 (TRKGTALGKMAKVSKDYEPVIQTYQKALTEHRNP), 382–415 (GDEEREKGNDFFKEQKYPDAVRHYTEAIKRNPKD), 417–449 (RAYSNRAACYTKLGAMPEGLKDAEKCIELDPTF), and 450–483 (LKGYSRKGAVQFFMKEYDNAMETYQKGLEHDPNN). The STI1 2 domain maps to 520 to 559 (DPEIQNILTDPVMRQVLSDLQENPAAAQKHMQNPMIMNKI).

Co-chaperone that forms a complex with HSP70 and HSP90 and preproteins (e.g. chloroplast preproteins). Phosphorylated. In terms of processing, acetylated.

It localises to the cytoplasm. The protein resides in the nucleus. Functionally, mediates the association of the molecular chaperones HSP70 and HSP90. Mediates nuclear encoded chloroplast preproteins binding to HSP90 prior to chloroplastic sorting. The chain is Hsp70-Hsp90 organizing protein 2 (HOP2) from Arabidopsis thaliana (Mouse-ear cress).